Here is a 325-residue protein sequence, read N- to C-terminus: Ribosomal RNA small subunit methyltransferase H (325 aa).

Residues 1–28 (MTASQPLDQADQDSESSSAGSSAAETEH) are disordered. A compositionally biased stretch (low complexity) spans 15 to 24 (ESSSAGSSAA). Residues 56 to 58 (GGH), Asp-82, Tyr-110, Asp-131, and Gln-138 each bind S-adenosyl-L-methionine. Positions 303-325 (TDEEVQANPRSRSAKLRVAKRVE) are disordered. Positions 314–325 (RSAKLRVAKRVE) are enriched in basic residues.

It belongs to the methyltransferase superfamily. RsmH family.

The protein localises to the cytoplasm. The enzyme catalyses cytidine(1402) in 16S rRNA + S-adenosyl-L-methionine = N(4)-methylcytidine(1402) in 16S rRNA + S-adenosyl-L-homocysteine + H(+). Its function is as follows. Specifically methylates the N4 position of cytidine in position 1402 (C1402) of 16S rRNA. This Rhodopirellula baltica (strain DSM 10527 / NCIMB 13988 / SH1) protein is Ribosomal RNA small subunit methyltransferase H.